We begin with the raw amino-acid sequence, 368 residues long: 3-dehydroquinate synthase (368 aa).

It belongs to the archaeal-type DHQ synthase family.

The catalysed reaction is 2-amino-2,3,7-trideoxy-D-lyxo-hept-6-ulosonate + NAD(+) + H2O = 3-dehydroquinate + NH4(+) + NADH + H(+). Its function is as follows. Catalyzes the oxidative deamination and cyclization of 2-amino-3,7-dideoxy-D-threo-hept-6-ulosonic acid (ADH) to yield 3-dehydroquinate (DHQ), which is fed into the canonical shikimic pathway of aromatic amino acid biosynthesis. This is 3-dehydroquinate synthase from Methanobrevibacter smithii (strain ATCC 35061 / DSM 861 / OCM 144 / PS).